The chain runs to 214 residues: N-(5'-phosphoribosyl)anthranilate isomerase (214 aa).

This sequence belongs to the TrpF family.

It carries out the reaction N-(5-phospho-beta-D-ribosyl)anthranilate = 1-(2-carboxyphenylamino)-1-deoxy-D-ribulose 5-phosphate. It functions in the pathway amino-acid biosynthesis; L-tryptophan biosynthesis; L-tryptophan from chorismate: step 3/5. The chain is N-(5'-phosphoribosyl)anthranilate isomerase from Rhodospirillum centenum (strain ATCC 51521 / SW).